Reading from the N-terminus, the 130-residue chain is Small ribosomal subunit protein uS11c (130 aa).

The protein belongs to the universal ribosomal protein uS11 family. As to quaternary structure, part of the 30S ribosomal subunit.

It is found in the plastid. The polypeptide is Small ribosomal subunit protein uS11c (Aneura mirabilis (Parasitic liverwort)).